Reading from the N-terminus, the 215-residue chain is 3-isopropylmalate dehydratase small subunit (215 aa).

It belongs to the LeuD family. LeuD type 1 subfamily. In terms of assembly, heterodimer of LeuC and LeuD.

It carries out the reaction (2R,3S)-3-isopropylmalate = (2S)-2-isopropylmalate. Its pathway is amino-acid biosynthesis; L-leucine biosynthesis; L-leucine from 3-methyl-2-oxobutanoate: step 2/4. Functionally, catalyzes the isomerization between 2-isopropylmalate and 3-isopropylmalate, via the formation of 2-isopropylmaleate. This is 3-isopropylmalate dehydratase small subunit from Leptothrix cholodnii (strain ATCC 51168 / LMG 8142 / SP-6) (Leptothrix discophora (strain SP-6)).